Reading from the N-terminus, the 961-residue chain is Endochitinase A (961 aa).

Positions M1 to A21 are cleaved as a signal peptide. The GH18 domain occupies S28–L339. E175 (proton donor) is an active-site residue. 4 disordered regions span residues D338–E720, T767–I787, P813–S842, and H912–T933. Pro residues predominate over residues N342–T355. Composition is skewed to low complexity over residues P356 to S510, S519 to S544, T552 to T604, and T612 to S635. Over residues G636–N665 the composition is skewed to polar residues. Over residues S666–E720 the composition is skewed to low complexity. A lipid anchor (GPI-anchor amidated glycine) is attached at G936. The propeptide at A937–L961 is removed in mature form.

The protein belongs to the glycosyl hydrolase 18 family. Chitinase class III subfamily. In terms of processing, O-glycosylated but not N-glycosylated.

The protein localises to the cell membrane. It is found in the secreted. The protein resides in the cell wall. It localises to the cell tip. It catalyses the reaction Random endo-hydrolysis of N-acetyl-beta-D-glucosaminide (1-&gt;4)-beta-linkages in chitin and chitodextrins.. Functionally, GPI-anchored chitinase involved in the degradation of chitin, a component of the cell walls of fungi and exoskeletal elements of some animals (including worms and arthropods). Required to reshape the cell wall at the sites where cell wall remodeling and/or cell wall maturation actively take place such as sites of conidia formation. The sequence is that of Endochitinase A (chiA) from Emericella nidulans (Aspergillus nidulans).